The sequence spans 439 residues: F-box/FBD/LRR-repeat protein At5g56570 (439 aa).

Positions 35–81 constitute an F-box domain; sequence PTELSDMPDDLIFKIFSFLPFFKEDLATRFISEYGKGLWNPDPNAIF. LRR repeat units lie at residues 155 to 177 and 223 to 246; these read CTTL…WFRL and VPTL…SFWI. An FBD domain is found at 361 to 411; it reads VWEKPTVVPECLSTRLEILKWRDYEGTEHEKDMVGYILANATFLQRATFST.

In Arabidopsis thaliana (Mouse-ear cress), this protein is F-box/FBD/LRR-repeat protein At5g56570.